The sequence spans 133 residues: Small ribosomal subunit protein uS9 (133 aa).

A disordered region spans residues 101-133 (MKPKGLLTRDPREVERKKYGLKKARRAPQFSKR). Residues 107-118 (LTRDPREVERKK) are compositionally biased toward basic and acidic residues. Residues 119–133 (YGLKKARRAPQFSKR) show a composition bias toward basic residues.

This sequence belongs to the universal ribosomal protein uS9 family.

The sequence is that of Small ribosomal subunit protein uS9 from Deinococcus radiodurans (strain ATCC 13939 / DSM 20539 / JCM 16871 / CCUG 27074 / LMG 4051 / NBRC 15346 / NCIMB 9279 / VKM B-1422 / R1).